The sequence spans 473 residues: MHDNIFLPDAFLAQVQETMPSHLSMDEFIAACKRPLRRSIRVNTLKNSVEEFKQRAAEKQWDLEPVPWCDTGFWITRPESDTVKLGSTAEHMAGLFYIQEASSMMPVTALLKDNDDIEMALDMASAPGSKTTQLAAGMKNQGALVANEFSSSRVKVLCSNIQRCGVSNVALTHFDGRVFGGWLPETFDSILLDAPCSGEGTIRKDPDAMHNWSPESVIEIGDTQRDLIESAFHALKPGGVMVYSTCTLNHEENQNICHHLVEQFGDAVTFKPLGDLFENAEKALTKEGFLHIYPQIFDSEGFFVAKIRKNSSTTPPEVKKRLGKFPFAPASNKEAQAIEAELKSTLQLAIPEDNEFWIRDKEVWAFPKRMKPLIGEMRYHRIGFKLAETHKKGYRWQHEAIMALATADNPTCAELTTEQAREWYMGRDVRPDFSGKGETIVTYKGAVIGLGKWVGNRIKNGLPRELVRDGNLF.

Residues 124 to 130, glutamate 148, aspartate 175, and aspartate 193 each bind S-adenosyl-L-methionine; that span reads ASAPGSK. Cysteine 246 serves as the catalytic Nucleophile.

The protein belongs to the class I-like SAM-binding methyltransferase superfamily. RsmB/NOP family.

The protein localises to the cytoplasm. It carries out the reaction cytidine(1407) in 16S rRNA + S-adenosyl-L-methionine = 5-methylcytidine(1407) in 16S rRNA + S-adenosyl-L-homocysteine + H(+). In terms of biological role, specifically methylates the cytosine at position 1407 (m5C1407) of 16S rRNA. This chain is Ribosomal RNA small subunit methyltransferase F, found in Aliivibrio fischeri (strain MJ11) (Vibrio fischeri).